The primary structure comprises 564 residues: Dihydroxy-acid dehydratase (564 aa).

Asp-80 serves as a coordination point for Mg(2+). Position 121 (Cys-121) interacts with [2Fe-2S] cluster. Mg(2+)-binding residues include Asp-122 and Lys-123. Residue Lys-123 is modified to N6-carboxylysine. Residue Cys-194 participates in [2Fe-2S] cluster binding. Residue Glu-447 participates in Mg(2+) binding. Ser-473 serves as the catalytic Proton acceptor.

The protein belongs to the IlvD/Edd family. In terms of assembly, homodimer. The cofactor is [2Fe-2S] cluster. Requires Mg(2+) as cofactor.

It catalyses the reaction (2R)-2,3-dihydroxy-3-methylbutanoate = 3-methyl-2-oxobutanoate + H2O. The catalysed reaction is (2R,3R)-2,3-dihydroxy-3-methylpentanoate = (S)-3-methyl-2-oxopentanoate + H2O. It functions in the pathway amino-acid biosynthesis; L-isoleucine biosynthesis; L-isoleucine from 2-oxobutanoate: step 3/4. Its pathway is amino-acid biosynthesis; L-valine biosynthesis; L-valine from pyruvate: step 3/4. Its function is as follows. Functions in the biosynthesis of branched-chain amino acids. Catalyzes the dehydration of (2R,3R)-2,3-dihydroxy-3-methylpentanoate (2,3-dihydroxy-3-methylvalerate) into 2-oxo-3-methylpentanoate (2-oxo-3-methylvalerate) and of (2R)-2,3-dihydroxy-3-methylbutanoate (2,3-dihydroxyisovalerate) into 2-oxo-3-methylbutanoate (2-oxoisovalerate), the penultimate precursor to L-isoleucine and L-valine, respectively. The polypeptide is Dihydroxy-acid dehydratase (Listeria welshimeri serovar 6b (strain ATCC 35897 / DSM 20650 / CCUG 15529 / CIP 8149 / NCTC 11857 / SLCC 5334 / V8)).